Reading from the N-terminus, the 163-residue chain is Myosin light chain 2 (163 aa).

EF-hand domains lie at 15–50 (DYINKLKDAFQMLDEDEDGLISRGDLTKIYATLGKT) and 92–127 (PEREELEESLKAIGRGHDLNVPLNEVIDSLKEAGFE). Positions 28, 30, 32, and 39 each coordinate Ca(2+).

Interacts with the IQ domain of MYO1.

The protein localises to the bud neck. In terms of biological role, regulatory light chain for the class II conventional myosin MYO1. May play a role in the disassembly of the MYO1 ring at the bud neck at the end of its contraction during cytokinesis. In Saccharomyces cerevisiae (strain ATCC 204508 / S288c) (Baker's yeast), this protein is Myosin light chain 2 (MLC2).